A 635-amino-acid chain; its full sequence is Probable potassium transport system protein Kup (635 aa).

A run of 12 helical transmembrane segments spans residues 22–42 (LVIGAIGVVFGDIGTSPLYTL), 59–79 (VLGILSLVFWALMLVVTLKYV), 111–131 (MYVVGILGIFGASLFFGDGVI), 148–168 (APKLEAFVVPITLVVLGMLFL), 180–200 (AFGPITLVWFFALGAIGVYNM), 216–236 (VLFFVEHNWHAVFVLGAVVLA), 259–279 (WQFVVLPMLTLTYLGQGALVL), 297–317 (ALYPMIVLATAATVIASQALI), 349–369 (IYVPAVNWCLLLAVAVAVVGF), 378–398 (AYGVSVTGTMLITTVLMVIYA), 404–424 (VPAPLLWLFALVFLAVDCAFF), and 428–448 (IIKFLDGAWFPLLLGLILFTL).

It belongs to the HAK/KUP transporter (TC 2.A.72) family.

It localises to the cell inner membrane. The catalysed reaction is K(+)(in) + H(+)(in) = K(+)(out) + H(+)(out). Functionally, transport of potassium into the cell. Likely operates as a K(+):H(+) symporter. This is Probable potassium transport system protein Kup from Xanthomonas oryzae pv. oryzae (strain KACC10331 / KXO85).